Here is a 239-residue protein sequence, read N- to C-terminus: Fatty acid metabolism regulator protein (239 aa).

In terms of domain architecture, HTH gntR-type spans 6-74; it reads QSPAGFAEEY…HGKPTKVNNF (69 aa). The segment at residues 34–53 is a DNA-binding region (H-T-H motif); sequence ERELSELIGVTRTTLREVLQ.

As to quaternary structure, homodimer.

Its subcellular location is the cytoplasm. Functionally, multifunctional regulator of fatty acid metabolism. In Salmonella paratyphi C (strain RKS4594), this protein is Fatty acid metabolism regulator protein.